The sequence spans 203 residues: Imidazole glycerol phosphate synthase subunit HisH 1 (203 aa).

The Glutamine amidotransferase type-1 domain maps to 1–203 (MIAIIDYNAG…KMIENFVELI (203 aa)). Cys82 serves as the catalytic Nucleophile. Active-site residues include His184 and Glu186.

As to quaternary structure, heterodimer of HisH and HisF.

The protein localises to the cytoplasm. It catalyses the reaction 5-[(5-phospho-1-deoxy-D-ribulos-1-ylimino)methylamino]-1-(5-phospho-beta-D-ribosyl)imidazole-4-carboxamide + L-glutamine = D-erythro-1-(imidazol-4-yl)glycerol 3-phosphate + 5-amino-1-(5-phospho-beta-D-ribosyl)imidazole-4-carboxamide + L-glutamate + H(+). The catalysed reaction is L-glutamine + H2O = L-glutamate + NH4(+). The protein operates within amino-acid biosynthesis; L-histidine biosynthesis; L-histidine from 5-phospho-alpha-D-ribose 1-diphosphate: step 5/9. IGPS catalyzes the conversion of PRFAR and glutamine to IGP, AICAR and glutamate. The HisH subunit provides the glutamine amidotransferase activity that produces the ammonia necessary to HisF for the synthesis of IGP and AICAR. The protein is Imidazole glycerol phosphate synthase subunit HisH 1 (hisH1) of Methanococcus maripaludis (strain DSM 14266 / JCM 13030 / NBRC 101832 / S2 / LL).